We begin with the raw amino-acid sequence, 489 residues long: Phosphoglucosamine mutase (489 aa).

The active-site Phosphoserine intermediate is S136. Mg(2+) is bound by residues S136, D275, D277, and D279. Position 136 is a phosphoserine (S136).

The protein belongs to the phosphohexose mutase family. It depends on Mg(2+) as a cofactor. In terms of processing, activated by phosphorylation.

It carries out the reaction alpha-D-glucosamine 1-phosphate = D-glucosamine 6-phosphate. In terms of biological role, catalyzes the conversion of glucosamine-6-phosphate to glucosamine-1-phosphate. The chain is Phosphoglucosamine mutase from Trichodesmium erythraeum (strain IMS101).